A 409-amino-acid chain; its full sequence is Na(+)-translocating NADH-quinone reductase subunit F (409 aa).

Residues 5 to 25 (FIFGIIAFTALVLVLAVIILF) traverse the membrane as a helical segment. The 2Fe-2S ferredoxin-type domain maps to 34-128 (GDITISINND…SMDVELPEEI (95 aa)). Positions 71, 77, 80, and 112 each coordinate [2Fe-2S] cluster. One can recognise an FAD-binding FR-type domain in the interval 131–271 (VKKWECTVIS…SGPFGEFFAK (141 aa)).

This sequence belongs to the NqrF family. As to quaternary structure, composed of six subunits; NqrA, NqrB, NqrC, NqrD, NqrE and NqrF. The cofactor is [2Fe-2S] cluster. It depends on FAD as a cofactor.

The protein resides in the cell inner membrane. It catalyses the reaction a ubiquinone + n Na(+)(in) + NADH + H(+) = a ubiquinol + n Na(+)(out) + NAD(+). Functionally, NQR complex catalyzes the reduction of ubiquinone-1 to ubiquinol by two successive reactions, coupled with the transport of Na(+) ions from the cytoplasm to the periplasm. The first step is catalyzed by NqrF, which accepts electrons from NADH and reduces ubiquinone-1 to ubisemiquinone by a one-electron transfer pathway. The protein is Na(+)-translocating NADH-quinone reductase subunit F of Actinobacillus pleuropneumoniae serotype 5b (strain L20).